The primary structure comprises 1399 residues: DNA-directed RNA polymerase subunit beta' (1399 aa).

Residues cysteine 70, cysteine 72, cysteine 85, and cysteine 88 each contribute to the Zn(2+) site. Residues aspartate 460, aspartate 462, and aspartate 464 each contribute to the Mg(2+) site. Zn(2+)-binding residues include cysteine 814, cysteine 888, cysteine 895, and cysteine 898.

This sequence belongs to the RNA polymerase beta' chain family. The RNAP catalytic core consists of 2 alpha, 1 beta, 1 beta' and 1 omega subunit. When a sigma factor is associated with the core the holoenzyme is formed, which can initiate transcription. It depends on Mg(2+) as a cofactor. Requires Zn(2+) as cofactor.

It carries out the reaction RNA(n) + a ribonucleoside 5'-triphosphate = RNA(n+1) + diphosphate. Functionally, DNA-dependent RNA polymerase catalyzes the transcription of DNA into RNA using the four ribonucleoside triphosphates as substrates. The protein is DNA-directed RNA polymerase subunit beta' of Stutzerimonas stutzeri (strain A1501) (Pseudomonas stutzeri).